Here is a 135-residue protein sequence, read N- to C-terminus: Phosphomevalonate dehydratase small subunit (135 aa).

Residue S67 is the Proton acceptor of the active site.

Belongs to the AcnX type II small subunit family. Heterodimer composed of a large subunit (PMDh-L) and a small subunit (PMDh-S).

It catalyses the reaction (R)-5-phosphomevalonate = (2E)-3-methyl-5-phosphooxypent-2-enoate + H2O. It participates in isoprenoid biosynthesis; isopentenyl diphosphate biosynthesis via mevalonate pathway. Component of a hydro-lyase that catalyzes the dehydration of mevalonate 5-phosphate (MVA5P) to form trans-anhydromevalonate 5-phosphate (tAHMP). Involved in the archaeal mevalonate (MVA) pathway, which provides fundamental precursors for isoprenoid biosynthesis, such as isopentenyl diphosphate (IPP) and dimethylallyl diphosphate (DMAPP). The protein is Phosphomevalonate dehydratase small subunit of Methanopyrus kandleri (strain AV19 / DSM 6324 / JCM 9639 / NBRC 100938).